Consider the following 507-residue polypeptide: MTAQSPYLSFHGIGKEFPGVKALSDISFSCHAGQIHALMGENGAGKSTLLKILSGNYSPSAGEIHIQGKPVQFSNTMDALNAGVAIIYQELHLVPEMTVAENIYLGQLPHKYGMVNYSLLRYEAKLQLQHLGLDIDPDTPLKYLSIGQWQMVEIAKALARNAKIIAFDEPTSSLSAREIEQLFRVITELRSEGRIILYVSHRMEEIFALSDAITVFKDGRYVCTFDDMQQVNHESLVQAMVGRNLGNIYGYAPRPHGEDRLTLKDVKAPGVKSTISLNVKQGEIVGLFGLVGAGRSELMKGLFGATKITSGQVLLDGKPLVVNSPIDAIRQGVMLCPEDRKADGIIPVHSVRDNINISARRKSLKAGFIINNQWEADNAAQRIDALNIKTPSDEQLIMNLSGGNQQKVILGRWLSEEMKVILLDEPTRGIDVGAKHEIYHVIYELANQGIAVLFASSDLPEVLGLADRIIVMREGAVSGELLHADATEQKVLSLAMLRIPDIESAVA.

2 consecutive ABC transporter domains span residues 8 to 243 (LSFH…MVGR) and 255 to 499 (PHGE…MLRI). ATP is bound at residue 40-47 (GENGAGKS).

Belongs to the ABC transporter superfamily. Arabinose importer (TC 3.A.1.2.2) family. In terms of assembly, the complex is composed of two ATP-binding proteins (AraG), two transmembrane proteins (AraH) and a solute-binding protein (AraF).

Its subcellular location is the cell inner membrane. It carries out the reaction L-arabinose(out) + ATP + H2O = L-arabinose(in) + ADP + phosphate + H(+). Its function is as follows. Part of the ABC transporter complex AraFGH involved in arabinose import. Responsible for energy coupling to the transport system. In Pectobacterium atrosepticum (strain SCRI 1043 / ATCC BAA-672) (Erwinia carotovora subsp. atroseptica), this protein is Arabinose import ATP-binding protein AraG.